Here is a 446-residue protein sequence, read N- to C-terminus: MSTWPAPSTATPVHATVTVPGSKSQTNRALVLAALAVPQGSSTISGALRSRDTDLMISALQGLGVVVEAPDTDGSDGTELTVSGALAPKAGARIDCGLAGTVLRFVPPVAALTTETVTFDGDEQARARPIAPLLDGLRALGVAIDGDGLPFSVRGQGSVRGGTVEIDASGSSQFVSGLLLSGAAFTEGLTVVHTGGAVPSAPHIAMTVSMLRDAGVEVDDSAADRWRVAPGPIAARHWAVEPDLSNAVPFLAAAVISGGTVRVTGWPTVSTQPAATILSLLTSLGSEVRQGNSHLEVQGATSYDGIDVDLRDVGELAPSVAAMAALASPGSVSRLRGIAHLRGHETDRLAALSAELNRLGGQCEETDDGLVITARQMHGGVWRSYADHRMATAGAIVGLRVPGVEVEDIGTTAKTLPDFPQLWADMLAGQTDLQAGAPHAGRNQGR.

The tract at residues 1 to 20 is disordered; sequence MSTWPAPSTATPVHATVTVP. Positions 23, 24, and 28 each coordinate 3-phosphoshikimate. K23 is a phosphoenolpyruvate binding site. Residues G100 and R128 each contribute to the phosphoenolpyruvate site. 3-phosphoshikimate is bound by residues S171, S172, Q173, S200, E315, and H344. Phosphoenolpyruvate is bound at residue Q173. E315 acts as the Proton acceptor in catalysis. Phosphoenolpyruvate-binding residues include R348, R389, and K414.

This sequence belongs to the EPSP synthase family. Monomer.

It localises to the cytoplasm. It carries out the reaction 3-phosphoshikimate + phosphoenolpyruvate = 5-O-(1-carboxyvinyl)-3-phosphoshikimate + phosphate. It functions in the pathway metabolic intermediate biosynthesis; chorismate biosynthesis; chorismate from D-erythrose 4-phosphate and phosphoenolpyruvate: step 6/7. Catalyzes the transfer of the enolpyruvyl moiety of phosphoenolpyruvate (PEP) to the 5-hydroxyl of shikimate-3-phosphate (S3P) to produce enolpyruvyl shikimate-3-phosphate and inorganic phosphate. The chain is 3-phosphoshikimate 1-carboxyvinyltransferase from Mycolicibacterium vanbaalenii (strain DSM 7251 / JCM 13017 / BCRC 16820 / KCTC 9966 / NRRL B-24157 / PYR-1) (Mycobacterium vanbaalenii).